Here is a 422-residue protein sequence, read N- to C-terminus: UDP-N-acetylglucosamine 1-carboxyvinyltransferase (422 aa).

22–23 (KN) contributes to the phosphoenolpyruvate binding site. A UDP-N-acetyl-alpha-D-glucosamine-binding site is contributed by arginine 93. Cysteine 117 functions as the Proton donor in the catalytic mechanism. Cysteine 117 carries the 2-(S-cysteinyl)pyruvic acid O-phosphothioketal modification. Residues 122–126 (RPVDL), aspartate 308, and leucine 330 contribute to the UDP-N-acetyl-alpha-D-glucosamine site.

It belongs to the EPSP synthase family. MurA subfamily.

It localises to the cytoplasm. It carries out the reaction phosphoenolpyruvate + UDP-N-acetyl-alpha-D-glucosamine = UDP-N-acetyl-3-O-(1-carboxyvinyl)-alpha-D-glucosamine + phosphate. It functions in the pathway cell wall biogenesis; peptidoglycan biosynthesis. In terms of biological role, cell wall formation. Adds enolpyruvyl to UDP-N-acetylglucosamine. This chain is UDP-N-acetylglucosamine 1-carboxyvinyltransferase, found in Helicobacter pylori (strain Shi470).